The sequence spans 796 residues: Kinesin-like protein KIF3C (796 aa).

The region spanning 10 to 367 is the Kinesin motor domain; it reads ALKVVARCRP…LRFANRAKNI (358 aa). 97-104 is a binding site for ATP; it reads GQTGTGKT. Disordered stretches follow at residues 252-292, 397-422, and 758-796; these read RQNK…PKEA, EKKGMLGKRPRRKSSRRKKAVSAPAG, and KVRKSRSWCQSPQRMPPPSTAHASMTSVPLHPATVVDHD. A compositionally biased stretch (low complexity) spans 256–269; that stretch reads AGPNAAGGPATQPT. Residues 378 to 632 adopt a coiled-coil conformation; that stretch reads KDTLLREFQE…NEQTRELKLK (255 aa). A compositionally biased stretch (basic residues) spans 401-416; that stretch reads MLGKRPRRKSSRRKKA. The tract at residues 633–793 is globular; sequence YLIIENFIPP…SVPLHPATVV (161 aa).

It belongs to the TRAFAC class myosin-kinesin ATPase superfamily. Kinesin family. Kinesin II subfamily. In terms of assembly, heterodimer of KIF3A and KIF3C.

It is found in the cytoplasm. The protein resides in the cytoskeleton. Its function is as follows. Microtubule-based anterograde translocator for membranous organelles. In Mus musculus (Mouse), this protein is Kinesin-like protein KIF3C (Kif3c).